A 367-amino-acid polypeptide reads, in one-letter code: Tetraacyldisaccharide 4'-kinase (367 aa).

Val-68–Thr-75 contributes to the ATP binding site.

The protein belongs to the LpxK family.

It catalyses the reaction a lipid A disaccharide + ATP = a lipid IVA + ADP + H(+). Its pathway is glycolipid biosynthesis; lipid IV(A) biosynthesis; lipid IV(A) from (3R)-3-hydroxytetradecanoyl-[acyl-carrier-protein] and UDP-N-acetyl-alpha-D-glucosamine: step 6/6. In terms of biological role, transfers the gamma-phosphate of ATP to the 4'-position of a tetraacyldisaccharide 1-phosphate intermediate (termed DS-1-P) to form tetraacyldisaccharide 1,4'-bis-phosphate (lipid IVA). This is Tetraacyldisaccharide 4'-kinase from Chlamydia abortus (strain DSM 27085 / S26/3) (Chlamydophila abortus).